Reading from the N-terminus, the 220-residue chain is ATP-dependent dethiobiotin synthetase BioD (220 aa).

An ATP-binding site is contributed by 12–17 (DVGKTI). T16 is a Mg(2+) binding site. The active site involves K37. T41 contributes to the substrate binding site. ATP contacts are provided by residues D49, 107–110 (EGAG), 167–168 (GS), and 197–199 (PAG). Mg(2+)-binding residues include D49 and E107.

Belongs to the dethiobiotin synthetase family. Homodimer. Requires Mg(2+) as cofactor.

It localises to the cytoplasm. The catalysed reaction is (7R,8S)-7,8-diammoniononanoate + CO2 + ATP = (4R,5S)-dethiobiotin + ADP + phosphate + 3 H(+). Its pathway is cofactor biosynthesis; biotin biosynthesis; biotin from 7,8-diaminononanoate: step 1/2. Its function is as follows. Catalyzes a mechanistically unusual reaction, the ATP-dependent insertion of CO2 between the N7 and N8 nitrogen atoms of 7,8-diaminopelargonic acid (DAPA, also called 7,8-diammoniononanoate) to form a ureido ring. The chain is ATP-dependent dethiobiotin synthetase BioD from Corynebacterium efficiens (strain DSM 44549 / YS-314 / AJ 12310 / JCM 11189 / NBRC 100395).